Consider the following 273-residue polypeptide: Shikimate dehydrogenase (NADP(+)) (273 aa).

Residues 15–17 (SKS) and threonine 62 each bind shikimate. The Proton acceptor role is filled by lysine 66. An NADP(+)-binding site is contributed by aspartate 78. Residues asparagine 87 and aspartate 103 each coordinate shikimate. Residues 127–131 (GAGGA), 150–155 (NRTYAR), and methionine 214 contribute to the NADP(+) site. Tyrosine 216 contacts shikimate. Glycine 238 is an NADP(+) binding site.

This sequence belongs to the shikimate dehydrogenase family. Homodimer.

It carries out the reaction shikimate + NADP(+) = 3-dehydroshikimate + NADPH + H(+). Its pathway is metabolic intermediate biosynthesis; chorismate biosynthesis; chorismate from D-erythrose 4-phosphate and phosphoenolpyruvate: step 4/7. In terms of biological role, involved in the biosynthesis of the chorismate, which leads to the biosynthesis of aromatic amino acids. Catalyzes the reversible NADPH linked reduction of 3-dehydroshikimate (DHSA) to yield shikimate (SA). The polypeptide is Shikimate dehydrogenase (NADP(+)) (Yersinia enterocolitica serotype O:8 / biotype 1B (strain NCTC 13174 / 8081)).